The primary structure comprises 1219 residues: ATP-dependent helicase/nuclease subunit A (1219 aa).

Residues 12–477 (TRWTDNQWKS…IDLSQNFRSR (466 aa)) form the UvrD-like helicase ATP-binding domain. 33 to 40 (AAAGSGKT) is a binding site for ATP. Positions 478 to 786 (EEVLTTTNYL…RMMTIHSSKG (309 aa)) constitute a UvrD-like helicase C-terminal domain. Residues 997-1016 (PSKQSVSELKRQHETEQSDT) form a disordered region. Positions 1004–1016 (ELKRQHETEQSDT) are enriched in basic and acidic residues.

The protein belongs to the helicase family. AddA subfamily. As to quaternary structure, heterodimer of AddA and AddB/RexB. Mg(2+) is required as a cofactor.

It catalyses the reaction Couples ATP hydrolysis with the unwinding of duplex DNA by translocating in the 3'-5' direction.. The catalysed reaction is ATP + H2O = ADP + phosphate + H(+). In terms of biological role, the heterodimer acts as both an ATP-dependent DNA helicase and an ATP-dependent, dual-direction single-stranded exonuclease. Recognizes the chi site generating a DNA molecule suitable for the initiation of homologous recombination. The AddA nuclease domain is required for chi fragment generation; this subunit has the helicase and 3' -&gt; 5' nuclease activities. This chain is ATP-dependent helicase/nuclease subunit A, found in Staphylococcus saprophyticus subsp. saprophyticus (strain ATCC 15305 / DSM 20229 / NCIMB 8711 / NCTC 7292 / S-41).